The following is a 306-amino-acid chain: Formimidoylglutamase (306 aa).

The segment covering 1–13 (MFQNATDWTPTST) has biased composition (polar residues). The tract at residues 1-36 (MFQNATDWTPTSTDPRDEQFGGVVEPVPTPSDADDY) is disordered. Residues N123, D147, H149, D151, D234, and D236 each coordinate Mn(2+).

It belongs to the arginase family. Requires Mn(2+) as cofactor.

It carries out the reaction N-formimidoyl-L-glutamate + H2O = formamide + L-glutamate. It participates in amino-acid degradation; L-histidine degradation into L-glutamate; L-glutamate from N-formimidoyl-L-glutamate (hydrolase route): step 1/1. In terms of biological role, catalyzes the conversion of N-formimidoyl-L-glutamate to L-glutamate and formamide. The chain is Formimidoylglutamase from Halobacterium salinarum (strain ATCC 29341 / DSM 671 / R1).